An 881-amino-acid polypeptide reads, in one-letter code: Lon protease (881 aa).

Over residues 1–24 (MAKNTDIEHDAHEPAGHGDVRESA) the composition is skewed to basic and acidic residues. Residues 1–77 (MAKNTDIEHD…RAGEAEKGVP (77 aa)) form a disordered region. The segment covering 49–59 (QTDTESAQGAA) has biased composition (polar residues). Positions 65-77 (EVQRAGEAEKGVP) are enriched in basic and acidic residues. Residues 94-287 (VHLIPLTGRP…EVFVYIKKEK (194 aa)) enclose the Lon N-terminal domain. ATP is bound at residue 440-447 (GPPGVGKT). One can recognise a Lon proteolytic domain in the interval 679 to 861 (ANKVGTAVGL…EEVLSLAFPK (183 aa)). Residues Ser767 and Lys810 contribute to the active site.

This sequence belongs to the peptidase S16 family. Homohexamer. Organized in a ring with a central cavity.

Its subcellular location is the cytoplasm. It carries out the reaction Hydrolysis of proteins in presence of ATP.. Its function is as follows. ATP-dependent serine protease that mediates the selective degradation of mutant and abnormal proteins as well as certain short-lived regulatory proteins. Required for cellular homeostasis and for survival from DNA damage and developmental changes induced by stress. Degrades polypeptides processively to yield small peptide fragments that are 5 to 10 amino acids long. Binds to DNA in a double-stranded, site-specific manner. The polypeptide is Lon protease (Treponema pallidum (strain Nichols)).